The following is a 209-amino-acid chain: 7-carboxy-7-deazaguanine synthase (209 aa).

Substrate contacts are provided by residues I10–G12 and R25. One can recognise a Radical SAM core domain in the interval Y16–D205. [4Fe-4S] cluster is bound by residues C29, C33, and C36. T38 lines the Mg(2+) pocket. Position 68 (T68) interacts with substrate. An S-adenosyl-L-methionine-binding site is contributed by G70.

The protein belongs to the radical SAM superfamily. 7-carboxy-7-deazaguanine synthase family. As to quaternary structure, homodimer. [4Fe-4S] cluster is required as a cofactor. It depends on S-adenosyl-L-methionine as a cofactor. The cofactor is Mg(2+).

The enzyme catalyses 6-carboxy-5,6,7,8-tetrahydropterin + H(+) = 7-carboxy-7-deazaguanine + NH4(+). Its pathway is purine metabolism; 7-cyano-7-deazaguanine biosynthesis. In terms of biological role, catalyzes the complex heterocyclic radical-mediated conversion of 6-carboxy-5,6,7,8-tetrahydropterin (CPH4) to 7-carboxy-7-deazaguanine (CDG), a step common to the biosynthetic pathways of all 7-deazapurine-containing compounds. The polypeptide is 7-carboxy-7-deazaguanine synthase (Thermoplasma acidophilum (strain ATCC 25905 / DSM 1728 / JCM 9062 / NBRC 15155 / AMRC-C165)).